The primary structure comprises 383 residues: ERCC4 domain-containing protein EP364R (383 aa).

The ERCC4 domain occupies 3–101 (FLVADHREHH…QLYFFVEGPA (99 aa)). Positions 336–367 (LHKVSDEASENASHDASENASDKVSSPTGHQT) are disordered. Basic and acidic residues predominate over residues 347 to 356 (ASHDASENAS). Residues 357 to 367 (DKVSSPTGHQT) show a composition bias toward polar residues.

Belongs to the asfivirus EP364R family.

Functionally, plays a role in the inhibition of type I interferon signaling pathway. Mechanistically, specifically interacts with 2',3'-cGAMP and cleaves it via its phosphodiesterase activity. In turn, prevents 2',3'-cGAMP interaction with host ER-resident STING1 leading to inhibition of downstream signaling pathway and type I interferon production. This is ERCC4 domain-containing protein EP364R from Ornithodoros (relapsing fever ticks).